The chain runs to 316 residues: Methionyl-tRNA formyltransferase (316 aa).

113–116 (SLLP) is a binding site for (6S)-5,6,7,8-tetrahydrofolate.

Belongs to the Fmt family.

The catalysed reaction is L-methionyl-tRNA(fMet) + (6R)-10-formyltetrahydrofolate = N-formyl-L-methionyl-tRNA(fMet) + (6S)-5,6,7,8-tetrahydrofolate + H(+). Functionally, attaches a formyl group to the free amino group of methionyl-tRNA(fMet). The formyl group appears to play a dual role in the initiator identity of N-formylmethionyl-tRNA by promoting its recognition by IF2 and preventing the misappropriation of this tRNA by the elongation apparatus. The polypeptide is Methionyl-tRNA formyltransferase (Proteus mirabilis (strain HI4320)).